We begin with the raw amino-acid sequence, 345 residues long: Serpentine receptor class beta-13 (345 aa).

Residues Met-1–Arg-22 are Extracellular-facing. Asn-5 is a glycosylation site (N-linked (GlcNAc...) asparagine). The chain crosses the membrane as a helical span at residues Phe-23–Met-43. Residues Phe-44–Thr-58 are Cytoplasmic-facing. The chain crosses the membrane as a helical span at residues Leu-59–Gly-79. Residues Tyr-80–Tyr-103 lie on the Extracellular side of the membrane. N-linked (GlcNAc...) asparagine glycosylation occurs at Asn-97. A helical transmembrane segment spans residues Ile-104 to Ile-124. Over Glu-125 to Leu-142 the chain is Cytoplasmic. A helical transmembrane segment spans residues Ile-143–Phe-163. Topologically, residues Gln-164–Tyr-189 are extracellular. A glycan (N-linked (GlcNAc...) asparagine) is linked at Asn-180. Residues Leu-190 to Val-210 form a helical membrane-spanning segment. Over His-211–Thr-241 the chain is Cytoplasmic. A helical membrane pass occupies residues Leu-242–Val-262. Residues Arg-263–Arg-280 lie on the Extracellular side of the membrane. The N-linked (GlcNAc...) asparagine glycan is linked to Asn-275. The helical transmembrane segment at Gly-281 to Leu-301 threads the bilayer. At Ser-302–Phe-345 the chain is on the cytoplasmic side.

It belongs to the nematode receptor-like protein srb family. In terms of tissue distribution, expressed in the head sensory neurons ASI, ASK and AWB. Not expressed in male somatic gonads or sperm.

It localises to the cell membrane. Its subcellular location is the perikaryon. It is found in the cell projection. The protein localises to the dendrite. Its function is as follows. G-protein coupled receptor that antagonizes the negative effects of the gcy-35 oxygen sensor on spermatogenesis. This leads to the maintenance of mitochondrial function in developing spermatocytes and/or spermatids prior to testis maturation during the early larval stages. Regulates the navigational capacity of sperm during hyperoxic conditions ensuring the proper targeting of sperm derived from males to the fertilization site in the uterus of hermaphrodites. May act in the same signaling pathway as the neuropeptide flp-21. This Caenorhabditis elegans protein is Serpentine receptor class beta-13.